Here is a 473-residue protein sequence, read N- to C-terminus: Photosystem II CP43 reaction center protein (473 aa).

The propeptide occupies 1 to 14 (MKTLYSLRRFYHVE). Threonine 15 bears the N-acetylthreonine mark. Residue threonine 15 is modified to Phosphothreonine. 5 consecutive transmembrane segments (helical) span residues 69-93 (LFEV…PHLA), 134-155 (LLGP…KDRN), 178-200 (KALY…RKIT), 255-275 (KPFA…LSYS), and 291-312 (WFNN…ASQA). Glutamate 367 provides a ligand contact to [CaMn4O5] cluster. The helical transmembrane segment at 447–471 (RARAAAAGFEKGIDRDFEPVLSMTP) threads the bilayer.

Belongs to the PsbB/PsbC family. PsbC subfamily. As to quaternary structure, PSII is composed of 1 copy each of membrane proteins PsbA, PsbB, PsbC, PsbD, PsbE, PsbF, PsbH, PsbI, PsbJ, PsbK, PsbL, PsbM, PsbT, PsbX, PsbY, PsbZ, Psb30/Ycf12, at least 3 peripheral proteins of the oxygen-evolving complex and a large number of cofactors. It forms dimeric complexes. Binds multiple chlorophylls and provides some of the ligands for the Ca-4Mn-5O cluster of the oxygen-evolving complex. It may also provide a ligand for a Cl- that is required for oxygen evolution. PSII binds additional chlorophylls, carotenoids and specific lipids. is required as a cofactor.

Its subcellular location is the plastid. The protein localises to the chloroplast thylakoid membrane. One of the components of the core complex of photosystem II (PSII). It binds chlorophyll and helps catalyze the primary light-induced photochemical processes of PSII. PSII is a light-driven water:plastoquinone oxidoreductase, using light energy to abstract electrons from H(2)O, generating O(2) and a proton gradient subsequently used for ATP formation. The protein is Photosystem II CP43 reaction center protein of Glycine max (Soybean).